The primary structure comprises 682 residues: L-type lectin-domain containing receptor kinase VI.2 (682 aa).

Residues 1 to 26 (MGTQRSMFIVSFLFKLFLFLSVHVRA) form the signal peptide. Residues 27-310 (QRTTTNFAFR…AKKEGLNSQV (284 aa)) are Extracellular-facing. Positions 29-277 (TTTNFAFRGF…AHYVMGWSFS (249 aa)) are legume-lectin like. The chain crosses the membrane as a helical span at residues 311 to 331 (IVMIVALSAVMLVMLVLLFFF). Residues 332–682 (VMYKKRLGQE…RVSSTSRISQ (351 aa)) lie on the Cytoplasmic side of the membrane. The Protein kinase domain maps to 367 to 641 (FKKTGIIGTG…LRYLNGEENV (275 aa)). ATP is bound by residues 373-381 (IGTGGFGTV) and lysine 395. Residue aspartate 494 is the Proton acceptor of the active site.

The protein in the C-terminal section; belongs to the protein kinase superfamily. Ser/Thr protein kinase family. In the N-terminal section; belongs to the leguminous lectin family. In terms of tissue distribution, strongly expressed in the vascular system and trichomes of the leaves. Also expressed in guard cells, anthers, stigmas and germinating seeds, but not found in petals or roots. Increased susceptibility to the bacteria Pseudomonas syringae, characterized by stronger necrotic symptoms and higher bacterial proliferation.

Its subcellular location is the cell membrane. It carries out the reaction L-seryl-[protein] + ATP = O-phospho-L-seryl-[protein] + ADP + H(+). The enzyme catalyses L-threonyl-[protein] + ATP = O-phospho-L-threonyl-[protein] + ADP + H(+). Involved in negative regulation of abscisic acid response in seed germination. In terms of biological role, involved in resistance response to the pathogenic bacteria Pseudomonas syringae. In Arabidopsis thaliana (Mouse-ear cress), this protein is L-type lectin-domain containing receptor kinase VI.2.